We begin with the raw amino-acid sequence, 365 residues long: Isopentenyl-diphosphate delta-isomerase (365 aa).

Substrate is bound at residue 8 to 9 (RK). Residues 67–69 (SIT), Ser-97, and Asn-126 each bind FMN. Residue 97–99 (SQR) participates in substrate binding. Gln-160 contributes to the substrate binding site. Glu-161 serves as a coordination point for Mg(2+). Residues Lys-192, Thr-222, 272 to 274 (GIR), and 293 to 294 (AL) contribute to the FMN site.

Belongs to the IPP isomerase type 2 family. In terms of assembly, homooctamer. Dimer of tetramers. FMN is required as a cofactor. The cofactor is NADPH. It depends on Mg(2+) as a cofactor.

The protein localises to the cytoplasm. The catalysed reaction is isopentenyl diphosphate = dimethylallyl diphosphate. Functionally, involved in the biosynthesis of isoprenoids. Catalyzes the 1,3-allylic rearrangement of the homoallylic substrate isopentenyl (IPP) to its allylic isomer, dimethylallyl diphosphate (DMAPP). The protein is Isopentenyl-diphosphate delta-isomerase of Methanosarcina barkeri (strain Fusaro / DSM 804).